The sequence spans 185 residues: Ribosome-recycling factor (185 aa).

This sequence belongs to the RRF family.

The protein localises to the cytoplasm. In terms of biological role, responsible for the release of ribosomes from messenger RNA at the termination of protein biosynthesis. May increase the efficiency of translation by recycling ribosomes from one round of translation to another. The sequence is that of Ribosome-recycling factor from Methylobacillus flagellatus (strain ATCC 51484 / DSM 6875 / VKM B-1610 / KT).